A 515-amino-acid polypeptide reads, in one-letter code: Cytochrome P450 705A22 (515 aa).

The helical transmembrane segment at 9 to 29 (FQNCFIFILIFLLTFLCFFFF) threads the bilayer. C454 contributes to the heme binding site.

Belongs to the cytochrome P450 family. Heme is required as a cofactor.

Its subcellular location is the membrane. Its function is as follows. Plays a role in the gravitropic response of the inflorescence stems and roots. May affect the synthesis of flavonols that have a role in regulating auxin transport. The protein is Cytochrome P450 705A22 of Arabidopsis thaliana (Mouse-ear cress).